We begin with the raw amino-acid sequence, 450 residues long: tRNA modification GTPase MnmE (450 aa).

(6S)-5-formyl-5,6,7,8-tetrahydrofolate is bound by residues Arg-20, Glu-78, and Lys-117. The TrmE-type G domain occupies 211–372 (GLRMVIVGKP…LEESIYRETQ (162 aa)). Asn-221 contacts K(+). Residues 221–226 (NVGKST), 240–246 (TDIPGTT), and 265–268 (DTAG) contribute to the GTP site. Residue Ser-225 participates in Mg(2+) binding. 3 residues coordinate K(+): Thr-240, Ile-242, and Thr-245. A Mg(2+)-binding site is contributed by Thr-246. A (6S)-5-formyl-5,6,7,8-tetrahydrofolate-binding site is contributed by Lys-450.

The protein belongs to the TRAFAC class TrmE-Era-EngA-EngB-Septin-like GTPase superfamily. TrmE GTPase family. As to quaternary structure, homodimer. Heterotetramer of two MnmE and two MnmG subunits. Requires K(+) as cofactor.

It localises to the cytoplasm. Functionally, exhibits a very high intrinsic GTPase hydrolysis rate. Involved in the addition of a carboxymethylaminomethyl (cmnm) group at the wobble position (U34) of certain tRNAs, forming tRNA-cmnm(5)s(2)U34. The polypeptide is tRNA modification GTPase MnmE (Thermotoga sp. (strain RQ2)).